We begin with the raw amino-acid sequence, 200 residues long: 7-methyl-GTP pyrophosphatase (200 aa).

D75 serves as the catalytic Proton acceptor.

Belongs to the Maf family. YceF subfamily. It depends on a divalent metal cation as a cofactor.

The protein localises to the cytoplasm. The enzyme catalyses N(7)-methyl-GTP + H2O = N(7)-methyl-GMP + diphosphate + H(+). Its function is as follows. Nucleoside triphosphate pyrophosphatase that hydrolyzes 7-methyl-GTP (m(7)GTP). May have a dual role in cell division arrest and in preventing the incorporation of modified nucleotides into cellular nucleic acids. The sequence is that of 7-methyl-GTP pyrophosphatase from Hydrogenovibrio crunogenus (strain DSM 25203 / XCL-2) (Thiomicrospira crunogena).